Reading from the N-terminus, the 341-residue chain is MNTATQAPKDSADSATERFRYGFLKGNPQLTKNGELKHLLSIEGLPKAIVNHILDTADQFVSVTDREVKKVPLLRGKSVFNLFFENSTRTRTTFEIAATRLSADVLNLNINASSTSKGESLLDTINNLSAMHADMFVVRHASSGAPYLIAQHCAPHVHVINAGDGRHAHPTQGLLDMYTIRHYKKDFTKLRVAIVGDILHSRVARSDIHALTTLGVPEVRAIGPRTLLPGGLEQMGVRVFHNLDEGLKDVDVIIMLRLQNERMSGALLPSAQEYFKSWGLTPERLALAAPEAIVMHPGPMNRGVEIDSQVADGPQSVILNQVTFGIAVRMAVMGIVAGNHD.

Carbamoyl phosphate-binding residues include R89 and T90. An L-aspartate-binding site is contributed by K117. Carbamoyl phosphate-binding residues include R139, H169, and Q172. Residues R202 and R257 each coordinate L-aspartate. Carbamoyl phosphate contacts are provided by G298 and P299.

This sequence belongs to the aspartate/ornithine carbamoyltransferase superfamily. ATCase family. In terms of assembly, heterododecamer (2C3:3R2) of six catalytic PyrB chains organized as two trimers (C3), and six regulatory PyrI chains organized as three dimers (R2).

The catalysed reaction is carbamoyl phosphate + L-aspartate = N-carbamoyl-L-aspartate + phosphate + H(+). It participates in pyrimidine metabolism; UMP biosynthesis via de novo pathway; (S)-dihydroorotate from bicarbonate: step 2/3. Catalyzes the condensation of carbamoyl phosphate and aspartate to form carbamoyl aspartate and inorganic phosphate, the committed step in the de novo pyrimidine nucleotide biosynthesis pathway. This chain is Aspartate carbamoyltransferase catalytic subunit, found in Paraburkholderia xenovorans (strain LB400).